Consider the following 94-residue polypeptide: Integration host factor subunit beta (94 aa).

It belongs to the bacterial histone-like protein family. As to quaternary structure, heterodimer of an alpha and a beta chain.

Its function is as follows. This protein is one of the two subunits of integration host factor, a specific DNA-binding protein that functions in genetic recombination as well as in transcriptional and translational control. The protein is Integration host factor subunit beta of Photorhabdus laumondii subsp. laumondii (strain DSM 15139 / CIP 105565 / TT01) (Photorhabdus luminescens subsp. laumondii).